The sequence spans 227 residues: Putative ankyrin repeat protein L45 (227 aa).

ANK repeat units lie at residues 38 to 66 (FETN…NINH), 78 to 107 (CLEE…NIFH), 108 to 137 (NENC…DVRA), 139 to 167 (NDYA…DVRS), 168 to 197 (CDSY…NYRA), and 199 to 227 (NHHA…GITK).

The chain is Putative ankyrin repeat protein L45 from Acanthamoeba polyphaga mimivirus (APMV).